Consider the following 151-residue polypeptide: ALK and LTK ligand 2 (151 aa).

Positions 1 to 25 (MRVSGRPMLLALLLLLSTVGDRGRA) are cleaved as a signal peptide. Cystine bridges form between Cys112-Cys148 and Cys126-Cys135.

It belongs to the ALKAL family. In terms of assembly, homodimer.

It is found in the secreted. It localises to the cell membrane. Its function is as follows. Cytokine that acts as a physiological ligand for receptor tyrosine kinases LTK and ALK, leading to their activation. Cytokine-binding is sufficient to activate LTK. In contrast, ALKAL2-driven activation of ALK is coupled with heparin-binding to ALK. Stimulation of ALK signaling is involved in neural development and regulation of energy expenditure. The chain is ALK and LTK ligand 2 from Mus musculus (Mouse).